An 848-amino-acid chain; its full sequence is Adenylate cyclase (848 aa).

Positions Met-1 to Leu-535 are catalytic. A regulatory region spans residues Lys-541 to Ser-848. His-609 is subject to Phosphohistidine; by CRR.

It belongs to the adenylyl cyclase class-1 family.

The protein localises to the cytoplasm. It carries out the reaction ATP = 3',5'-cyclic AMP + diphosphate. This Escherichia coli O157:H7 protein is Adenylate cyclase (cyaA).